Consider the following 244-residue polypeptide: Protein TIFY 10b (244 aa).

In terms of domain architecture, Tify spans 97-132 (QEPEKRQLTIFYGGKVLVFNDFPADKAKGLMQLASK). The short motif at 185-210 (PIARKASLHRFLEKRKDRLNAKTPYQ) is the Jas element. The Nuclear localization signal motif lies at 187–194 (ARKASLHR). Residues 193-244 (HRFLEKRKDRLNAKTPYQASPSDATPVKKEPESQPWLGLGPNAVVKPIERGQ) are disordered. Residues 194–204 (RFLEKRKDRLN) show a composition bias toward basic and acidic residues.

This sequence belongs to the TIFY/JAZ family. Ubiquitinated. Targeted for degradation by the SCF(COI1) E3 ubiquitin ligase-proteasome pathway during jasmonate signaling.

It localises to the nucleus. Repressor of jasmonate responses. This chain is Protein TIFY 10b, found in Oryza sativa subsp. indica (Rice).